The chain runs to 76 residues: Translational regulator CsrA (76 aa).

Belongs to the CsrA/RsmA family. In terms of assembly, homodimer; the beta-strands of each monomer intercalate to form a hydrophobic core, while the alpha-helices form wings that extend away from the core.

The protein resides in the cytoplasm. A translational regulator that binds mRNA to regulate translation initiation and/or mRNA stability. Usually binds in the 5'-UTR at or near the Shine-Dalgarno sequence preventing ribosome-binding, thus repressing translation. Its main target seems to be the major flagellin gene, while its function is anatagonized by FliW. The protein is Translational regulator CsrA of Wolinella succinogenes (strain ATCC 29543 / DSM 1740 / CCUG 13145 / JCM 31913 / LMG 7466 / NCTC 11488 / FDC 602W) (Vibrio succinogenes).